Consider the following 136-residue polypeptide: Large ribosomal subunit protein uL22 (136 aa).

This sequence belongs to the universal ribosomal protein uL22 family. As to quaternary structure, part of the 50S ribosomal subunit.

In terms of biological role, this protein binds specifically to 23S rRNA; its binding is stimulated by other ribosomal proteins, e.g. L4, L17, and L20. It is important during the early stages of 50S assembly. It makes multiple contacts with different domains of the 23S rRNA in the assembled 50S subunit and ribosome. Functionally, the globular domain of the protein is located near the polypeptide exit tunnel on the outside of the subunit, while an extended beta-hairpin is found that lines the wall of the exit tunnel in the center of the 70S ribosome. This chain is Large ribosomal subunit protein uL22, found in Bacteroides fragilis (strain ATCC 25285 / DSM 2151 / CCUG 4856 / JCM 11019 / LMG 10263 / NCTC 9343 / Onslow / VPI 2553 / EN-2).